A 306-amino-acid polypeptide reads, in one-letter code: UDP-3-O-acyl-N-acetylglucosamine deacetylase (306 aa).

Zn(2+) is bound by residues His79, His238, and Asp242. His265 (proton donor) is an active-site residue.

This sequence belongs to the LpxC family. Zn(2+) is required as a cofactor.

It carries out the reaction a UDP-3-O-[(3R)-3-hydroxyacyl]-N-acetyl-alpha-D-glucosamine + H2O = a UDP-3-O-[(3R)-3-hydroxyacyl]-alpha-D-glucosamine + acetate. Its pathway is glycolipid biosynthesis; lipid IV(A) biosynthesis; lipid IV(A) from (3R)-3-hydroxytetradecanoyl-[acyl-carrier-protein] and UDP-N-acetyl-alpha-D-glucosamine: step 2/6. Its function is as follows. Catalyzes the hydrolysis of UDP-3-O-myristoyl-N-acetylglucosamine to form UDP-3-O-myristoylglucosamine and acetate, the committed step in lipid A biosynthesis. In Idiomarina loihiensis (strain ATCC BAA-735 / DSM 15497 / L2-TR), this protein is UDP-3-O-acyl-N-acetylglucosamine deacetylase.